The chain runs to 320 residues: o-succinylbenzoate synthase (320 aa).

K133 serves as the catalytic Proton donor. Residues D161, E190, and D213 each coordinate Mg(2+). Residue K235 is the Proton acceptor of the active site.

It belongs to the mandelate racemase/muconate lactonizing enzyme family. MenC type 1 subfamily. A divalent metal cation is required as a cofactor.

It carries out the reaction (1R,6R)-6-hydroxy-2-succinyl-cyclohexa-2,4-diene-1-carboxylate = 2-succinylbenzoate + H2O. It functions in the pathway quinol/quinone metabolism; 1,4-dihydroxy-2-naphthoate biosynthesis; 1,4-dihydroxy-2-naphthoate from chorismate: step 4/7. Its pathway is quinol/quinone metabolism; menaquinone biosynthesis. In terms of biological role, converts 2-succinyl-6-hydroxy-2,4-cyclohexadiene-1-carboxylate (SHCHC) to 2-succinylbenzoate (OSB). The protein is o-succinylbenzoate synthase of Escherichia coli O17:K52:H18 (strain UMN026 / ExPEC).